Here is a 149-residue protein sequence, read N- to C-terminus: Altered inheritance of mitochondria protein 11 (149 aa).

2 helical membrane-spanning segments follow: residues 29 to 48 (MMRF…LAIT) and 79 to 101 (LVLA…CWIW).

Belongs to the AIM11 family.

Its subcellular location is the membrane. This is Altered inheritance of mitochondria protein 11 (AIM11) from Vanderwaltozyma polyspora (strain ATCC 22028 / DSM 70294 / BCRC 21397 / CBS 2163 / NBRC 10782 / NRRL Y-8283 / UCD 57-17) (Kluyveromyces polysporus).